We begin with the raw amino-acid sequence, 157 residues long: SsrA-binding protein (157 aa).

This sequence belongs to the SmpB family.

Its subcellular location is the cytoplasm. Required for rescue of stalled ribosomes mediated by trans-translation. Binds to transfer-messenger RNA (tmRNA), required for stable association of tmRNA with ribosomes. tmRNA and SmpB together mimic tRNA shape, replacing the anticodon stem-loop with SmpB. tmRNA is encoded by the ssrA gene; the 2 termini fold to resemble tRNA(Ala) and it encodes a 'tag peptide', a short internal open reading frame. During trans-translation Ala-aminoacylated tmRNA acts like a tRNA, entering the A-site of stalled ribosomes, displacing the stalled mRNA. The ribosome then switches to translate the ORF on the tmRNA; the nascent peptide is terminated with the 'tag peptide' encoded by the tmRNA and targeted for degradation. The ribosome is freed to recommence translation, which seems to be the essential function of trans-translation. The protein is SsrA-binding protein of Limosilactobacillus fermentum (strain NBRC 3956 / LMG 18251) (Lactobacillus fermentum).